The following is a 459-amino-acid chain: Cysteine--tRNA ligase (459 aa).

Cys29 contacts Zn(2+). The 'HIGH' region motif lies at Pro31–Asn41. Positions 209, 234, and 238 each coordinate Zn(2+). A 'KMSKS' region motif is present at residues Lys266–Ser270. ATP is bound at residue Lys269.

Belongs to the class-I aminoacyl-tRNA synthetase family. In terms of assembly, monomer. It depends on Zn(2+) as a cofactor.

The protein localises to the cytoplasm. It catalyses the reaction tRNA(Cys) + L-cysteine + ATP = L-cysteinyl-tRNA(Cys) + AMP + diphosphate. The chain is Cysteine--tRNA ligase from Paramagnetospirillum magneticum (strain ATCC 700264 / AMB-1) (Magnetospirillum magneticum).